The sequence spans 592 residues: Testis-specific serine kinase substrate (592 aa).

Ser-217 is modified (phosphoserine). The tract at residues 232 to 308 (QDETPRRQEA…VPAGWGMGPR (77 aa)) is disordered. Positions 234–264 (ETPRRQEAELQEPEEKQEPEEKQEPEEKQKP) are enriched in basic and acidic residues. Polar residues predominate over residues 269–281 (SWNSLGPAATSQG). Ser-288 is subject to Phosphoserine; by TSSK1 and TSSK2. At Ser-316 the chain carries Phosphoserine. Residues 566–592 (LEGSTGTMGGGSSAGTPPKQGGSAPEQ) are disordered.

Post-translationally, phosphorylated on serine residue(s) by STK22A/TSSK1 and STK22B/TSSK2. Highly expressed in testis. Expressed at low levels in prostate, female breast, placenta, ovary and thymus.

The protein resides in the cytoplasm. Its subcellular location is the cytoskeleton. The protein localises to the microtubule organizing center. It is found in the centrosome. It localises to the centriole. Functionally, may play a role in testicular physiology, most probably in the process of spermatogenesis or spermatid development. This chain is Testis-specific serine kinase substrate (TSKS), found in Homo sapiens (Human).